We begin with the raw amino-acid sequence, 123 residues long: Phosphoribosyl-AMP cyclohydrolase (123 aa).

Asp73 serves as a coordination point for Mg(2+). Cys74 lines the Zn(2+) pocket. Mg(2+)-binding residues include Asp75 and Asp77. The Zn(2+) site is built by Cys90 and Cys97.

This sequence belongs to the PRA-CH family. In terms of assembly, homodimer. Mg(2+) serves as cofactor. Zn(2+) is required as a cofactor.

It is found in the cytoplasm. It catalyses the reaction 1-(5-phospho-beta-D-ribosyl)-5'-AMP + H2O = 1-(5-phospho-beta-D-ribosyl)-5-[(5-phospho-beta-D-ribosylamino)methylideneamino]imidazole-4-carboxamide. The protein operates within amino-acid biosynthesis; L-histidine biosynthesis; L-histidine from 5-phospho-alpha-D-ribose 1-diphosphate: step 3/9. In terms of biological role, catalyzes the hydrolysis of the adenine ring of phosphoribosyl-AMP. The sequence is that of Phosphoribosyl-AMP cyclohydrolase from Methanoregula boonei (strain DSM 21154 / JCM 14090 / 6A8).